Consider the following 715-residue polypeptide: Palmitoyltransferase ZDHHC5 (715 aa).

The Cytoplasmic segment spans residues 1-13 (MPAESGKRFKPSK). The chain crosses the membrane as a helical span at residues 14 to 34 (YVPVSAAAIFLVGATTLFFAF). Residues 35–38 (TCPG) are Extracellular-facing. A helical transmembrane segment spans residues 39 to 59 (LSLCVSPAVPIYNAIVFLFVL). The Cytoplasmic portion of the chain corresponds to 60 to 148 (ANFSMATFMD…NCIGRRNYRY (89 aa)). Y91 carries the phosphotyrosine modification. In terms of domain architecture, DHHC spans 104 to 154 (KWCATCRFYRPPRCSHCSVCDNCVEEFDHHCPWVNNCIGRRNYRYFFLFLL). The active-site S-palmitoyl cysteine intermediate is the C134. The helical transmembrane segment at 149-169 (FFLFLLSLTAHIMGVFGFGLL) threads the bilayer. Topologically, residues 170–191 (YVLYHMEELSGVRTAVTMAVMC) are extracellular. Residues 192–212 (VAGLFFIPVAGLTGFHVVLVA) traverse the membrane as a helical segment. Residues 213 to 715 (RGRTTNEQVT…VGGTTYEISV (503 aa)) lie on the Cytoplasmic side of the membrane. S247, S296, and S299 each carry phosphoserine. The segment at 289 to 648 (GELRRSKSKG…SQKAPAGVSE (360 aa)) is disordered. A Phosphothreonine modification is found at T303. At S345 the chain carries Phosphoserine. Phosphothreonine occurs at positions 348 and 350. The segment covering 359–373 (SSSSTSAAMPHSSSA) has biased composition (low complexity). 4 positions are modified to phosphoserine: S380, S398, S406, and S409. T411 carries the post-translational modification Phosphothreonine. S415, S425, S429, and S432 each carry phosphoserine. The segment covering 422–432 (SSGSRSSSLKS) has biased composition (low complexity). A Phosphothreonine modification is found at T436. Positions 442 to 478 (QLQSIRSEGTTSTSYKSLANQTRNGSLSYDSLLTPSD) are enriched in polar residues. Residues S529 and S554 each carry the phosphoserine modification. At R617 the chain carries Omega-N-methylarginine. S621 carries the post-translational modification Phosphoserine. T659 bears the Phosphothreonine mark. A disordered region spans residues 666–715 (LKTAYSKSNGQPKSIGSASPGPGQQPLSSPTRGGVKKVSGVGGTTYEISV). Residues 668-679 (TAYSKSNGQPKS) show a composition bias toward polar residues. Over residues 681-695 (GSASPGPGQQPLSSP) the composition is skewed to low complexity. Phosphoserine occurs at positions 684 and 694. R697 carries the post-translational modification Omega-N-methylarginine.

It belongs to the DHHC palmitoyltransferase family. ERF2/ZDHHC9 subfamily. In terms of processing, phosphorylation regulates association with endocytic proteins and its subcellular localization. Phosphorylation by LYN during fatty acid uptake leads to inactivation of the activity. Post-translationally, autopalmitoylated. Palmitoylation of the C-terminal tail regulates stimulation-dependent plasma membrane motility.

The protein resides in the cell membrane. The enzyme catalyses L-cysteinyl-[protein] + hexadecanoyl-CoA = S-hexadecanoyl-L-cysteinyl-[protein] + CoA. Its function is as follows. Palmitoyltransferase that catalyzes the addition of palmitate onto various protein substrates such as CTNND2, CD36, GSDMD, NLRP3, NOD1, NOD2, STAT3 and S1PR1 thus plays a role in various biological processes including cell adhesion, inflammation, fatty acid uptake, bacterial sensing or cardiac functions. Plays an important role in the regulation of synapse efficacy by mediating palmitoylation of delta-catenin/CTNND2, thereby increasing synaptic delivery and surface stabilization of alpha-amino-3-hydroxy-5-methyl-4-isoxazole propionic acid receptors (AMPARs). Under basal conditions, remains at the synaptic membrane through FYN-mediated phosphorylation that prevents association with endocytic proteins. Neuronal activity enhances the internalization and trafficking of DHHC5 from spines to dendritic shafts where it palmitoylates delta-catenin/CTNND2. Regulates cell adhesion at the plasma membrane by palmitoylating GOLGA7B and DSG2. Plays a role in innate immune response by mediating the palmitoylation of NOD1 and NOD2 and their proper recruitment to the bacterial entry site and phagosomes. Also participates in fatty acid uptake by palmitoylating CD36 and thereby targeting it to the plasma membrane. Upon binding of fatty acids to CD36, gets phosphorylated by LYN leading to inactivation and subsequent CD36 caveolar endocytosis. Controls oligodendrocyte development by catalyzing STAT3 palmitoylation. Acts as a regulator of inflammatory response by mediating palmitoylation of NLRP3 and GSDMD. Palmitoylates NLRP3 to promote inflammasome assembly and activation. Activates pyroptosis by catalyzing palmitoylation of gasdermin-D (GSDMD), thereby promoting membrane translocation and pore formation of GSDMD. This chain is Palmitoyltransferase ZDHHC5 (ZDHHC5), found in Canis lupus familiaris (Dog).